The primary structure comprises 313 residues: Acetaldehyde dehydrogenase 1 (313 aa).

16–19 lines the NAD(+) pocket; it reads SGNI. Cys131 serves as the catalytic Acyl-thioester intermediate. NAD(+) contacts are provided by residues 162 to 170 and Asn281; that span reads SAGPGTRAN.

This sequence belongs to the acetaldehyde dehydrogenase family.

The catalysed reaction is acetaldehyde + NAD(+) + CoA = acetyl-CoA + NADH + H(+). The chain is Acetaldehyde dehydrogenase 1 from Mycobacterium sp. (strain JLS).